A 98-amino-acid polypeptide reads, in one-letter code: NADH-ubiquinone oxidoreductase chain 4L (98 aa).

Helical transmembrane passes span 1–21 (MEQI…GVLT), 28–48 (STLL…VLLI), and 61–81 (LILL…LVTI).

It belongs to the complex I subunit 4L family. As to quaternary structure, core subunit of respiratory chain NADH dehydrogenase (Complex I) which is composed of 45 different subunits.

The protein localises to the mitochondrion inner membrane. It catalyses the reaction a ubiquinone + NADH + 5 H(+)(in) = a ubiquinol + NAD(+) + 4 H(+)(out). Its function is as follows. Core subunit of the mitochondrial membrane respiratory chain NADH dehydrogenase (Complex I) which catalyzes electron transfer from NADH through the respiratory chain, using ubiquinone as an electron acceptor. Part of the enzyme membrane arm which is embedded in the lipid bilayer and involved in proton translocation. The polypeptide is NADH-ubiquinone oxidoreductase chain 4L (MT-ND4L) (Monodelphis domestica (Gray short-tailed opossum)).